The primary structure comprises 63 residues: Large ribosomal subunit protein uL30 (63 aa).

This sequence belongs to the universal ribosomal protein uL30 family. Part of the 50S ribosomal subunit.

This is Large ribosomal subunit protein uL30 from Rickettsia canadensis (strain McKiel).